Here is a 301-residue protein sequence, read N- to C-terminus: MTLDRDAASHVAEVLSEALPYIRRFVGKTLVIKYGGNAMESEELKTGFARDIVLMKAVGINPVVVHGGGPQIGDLLKRLSIESHFIDGMRVTDSATMDVVEMVLGGQVNKDIVNLINRHGGSAIGLTGKDAELIRARKLTVSRQTPEMTTPEIIDIGHVGEVVSVNTDLLNMLVKGDFIPVIAPIGVGANGESYNINADLVAGKVAEALKAEKLMLLTNIAGLMDKQGQVLTGLTTEQVNELIADGTIYGGMLPKIKCALDAVQGGVNSSHIIDGRVPNAVLLEIFTDSGVGTLITNRKPR.

Residues 68 to 69, R90, and N195 each bind substrate; that span reads GG.

It belongs to the acetylglutamate kinase family. ArgB subfamily.

It is found in the cytoplasm. It carries out the reaction N-acetyl-L-glutamate + ATP = N-acetyl-L-glutamyl 5-phosphate + ADP. It participates in amino-acid biosynthesis; L-arginine biosynthesis; N(2)-acetyl-L-ornithine from L-glutamate: step 2/4. Functionally, catalyzes the ATP-dependent phosphorylation of N-acetyl-L-glutamate. The protein is Acetylglutamate kinase of Pseudomonas putida (strain ATCC 700007 / DSM 6899 / JCM 31910 / BCRC 17059 / LMG 24140 / F1).